Here is a 286-residue protein sequence, read N- to C-terminus: ATP synthase gamma chain (286 aa).

This sequence belongs to the ATPase gamma chain family. As to quaternary structure, F-type ATPases have 2 components, CF(1) - the catalytic core - and CF(0) - the membrane proton channel. CF(1) has five subunits: alpha(3), beta(3), gamma(1), delta(1), epsilon(1). CF(0) has three main subunits: a, b and c.

It is found in the cell membrane. Produces ATP from ADP in the presence of a proton gradient across the membrane. The gamma chain is believed to be important in regulating ATPase activity and the flow of protons through the CF(0) complex. The polypeptide is ATP synthase gamma chain (Mycoplasma mobile (strain ATCC 43663 / 163K / NCTC 11711) (Mesomycoplasma mobile)).